Consider the following 217-residue polypeptide: Zinc finger CCHC-type and RNA-binding motif-containing protein 1 (217 aa).

The RRM domain occupies 10 to 88 (STVYVSNLPF…RVIKASIAID (79 aa)). The CCHC-type zinc-finger motif lies at 105–122 (SKCYECGESGHLSYACPK). Residues 120 to 217 (CPKNMLGERE…YFSDEEELSD (98 aa)) are disordered. Positions 145–163 (PEEEIEEVEVSEEEGEDPA) are enriched in acidic residues. Phosphoserine is present on residues Ser155, Ser210, and Ser216.

In terms of assembly, component of the U11/U12 snRNPs that are part of the U12-type spliceosome. Interacts with ZRSR1.

It localises to the nucleus. Its subcellular location is the nucleoplasm. The polypeptide is Zinc finger CCHC-type and RNA-binding motif-containing protein 1 (Zcrb1) (Rattus norvegicus (Rat)).